We begin with the raw amino-acid sequence, 1214 residues long: Ubiquitin carboxyl-terminal hydrolase 36 (1214 aa).

A disordered region spans residues 124 to 169 (AVGSNGHDNNTVNGGTVNGNRKQTVDSGQSNQNSSANPNELPKPKR). The span at 132 to 143 (NNTVNGGTVNGN) shows a compositional bias: low complexity. The segment covering 144 to 161 (RKQTVDSGQSNQNSSANP) has biased composition (polar residues). Residues 192–502 (AGMLNVGNTC…NAYIMFYELD (311 aa)) form the USP domain. Cys201 acts as the Nucleophile in catalysis. His461 (proton acceptor) is an active-site residue. Over residues 509–523 (SSTINNNSSSSSNNS) the composition is skewed to low complexity. Positions 509–532 (SSTINNNSSSSSNNSVAPKLNGLR) are disordered. Phosphoserine occurs at positions 553 and 555. Disordered stretches follow at residues 631 to 819 (GEAA…KQKT), 836 to 964 (HRIA…ASKS), 977 to 1001 (QKLL…SESV), 1048 to 1161 (HGDT…PNFQ), and 1176 to 1214 (KFQQ…QQQS). A compositionally biased stretch (low complexity) spans 633 to 651 (AAPNANTNANANKSSCNNN). Over residues 666–685 (SDEDEDEDDSDDDDDDDDDD) the composition is skewed to acidic residues. At Thr717 the chain carries Phosphothreonine. A phosphoserine mark is found at Ser727 and Ser729. Low complexity-rich tracts occupy residues 735 to 751 (QQQQ…PQQL) and 785 to 816 (KTNG…NSSK). Positions 856–868 (EQVQTEQGTKKLN) are enriched in polar residues. Over residues 869-878 (SASSASASKS) the composition is skewed to low complexity. Ser891 bears the Phosphoserine mark. Thr894 is modified (phosphothreonine). Phosphoserine is present on Ser897. A compositionally biased stretch (acidic residues) spans 915-942 (DDDDEEDEEEDDVEADADQEDDDDEVVV). Thr951 carries the phosphothreonine modification. Residues 983–1001 (SAKSAATTRPGNGYQSESV) show a composition bias toward polar residues. Positions 1058-1076 (NSSSNNSSNINSNSNSNSN) are enriched in low complexity. Residues 1089–1098 (EAREQRKRDA) are compositionally biased toward basic and acidic residues. Low complexity-rich tracts occupy residues 1178–1188 (QQQRALQRHLA) and 1197–1214 (QQQS…QQQS).

This sequence belongs to the peptidase C19 family. Interacts with atms/PAF1, but not with CycT.

The protein localises to the nucleus. It localises to the nucleolus. It catalyses the reaction Thiol-dependent hydrolysis of ester, thioester, amide, peptide and isopeptide bonds formed by the C-terminal Gly of ubiquitin (a 76-residue protein attached to proteins as an intracellular targeting signal).. Functionally, required for maintaining multiple types of adult stem cells, including male and female germline, epithelial follicle cell and intestinal stem cells. May function as a transcriptional repressor by continually deubiquiting histone H2B at the promoters of genes critical for cellular differentiation, thereby preventing histone H3 'Lys-4' trimethylation (H3K4). Controls selective autophagy activation by ubiquitinated proteins. The protein is Ubiquitin carboxyl-terminal hydrolase 36 (Usp36) of Drosophila virilis (Fruit fly).